The primary structure comprises 338 residues: Glycerol-3-phosphate dehydrogenase [NAD(P)+] (338 aa).

Ser-13, Trp-14, and Lys-108 together coordinate NADPH. Positions 108, 139, and 141 each coordinate sn-glycerol 3-phosphate. Ala-143 lines the NADPH pocket. Sn-glycerol 3-phosphate is bound by residues Lys-194, Asp-247, Ser-257, Arg-258, and Asn-259. The Proton acceptor role is filled by Lys-194. Arg-258 contacts NADPH. Residues Val-282 and Glu-284 each contribute to the NADPH site.

It belongs to the NAD-dependent glycerol-3-phosphate dehydrogenase family.

The protein localises to the cytoplasm. The enzyme catalyses sn-glycerol 3-phosphate + NAD(+) = dihydroxyacetone phosphate + NADH + H(+). It catalyses the reaction sn-glycerol 3-phosphate + NADP(+) = dihydroxyacetone phosphate + NADPH + H(+). It functions in the pathway membrane lipid metabolism; glycerophospholipid metabolism. Its function is as follows. Catalyzes the reduction of the glycolytic intermediate dihydroxyacetone phosphate (DHAP) to sn-glycerol 3-phosphate (G3P), the key precursor for phospholipid synthesis. The polypeptide is Glycerol-3-phosphate dehydrogenase [NAD(P)+] (Streptococcus agalactiae serotype III (strain NEM316)).